The sequence spans 339 residues: 4-hydroxy-2-oxovalerate aldolase (339 aa).

Residues 7–259 (VILHDMSLRD…QSGIDLYKIM (253 aa)) form the Pyruvate carboxyltransferase domain. Residue 15-16 (RD) participates in substrate binding. D16 lines the Mn(2+) pocket. H19 functions as the Proton acceptor in the catalytic mechanism. The substrate site is built by S169 and H198. Mn(2+) contacts are provided by H198 and H200. Position 289 (Y289) interacts with substrate.

The protein belongs to the 4-hydroxy-2-oxovalerate aldolase family.

The catalysed reaction is (S)-4-hydroxy-2-oxopentanoate = acetaldehyde + pyruvate. This Marinomonas sp. (strain MWYL1) protein is 4-hydroxy-2-oxovalerate aldolase.